The following is a 326-amino-acid chain: Zona pellucida-binding protein 2 (326 aa).

Residues 1–20 (MLAWALLSAVLWSLAGVGSA) form the signal peptide. Residues Asn86, Asn220, and Asn256 are each glycosylated (N-linked (GlcNAc...) asparagine).

This sequence belongs to the zona pellucida-binding protein Sp38 family. In terms of processing, N-glycosylated.

It is found in the secreted. Its subcellular location is the cytoplasmic vesicle. The protein resides in the secretory vesicle. The protein localises to the acrosome. Is implicated in sperm-oocyte interaction during fertilization. The sequence is that of Zona pellucida-binding protein 2 (Zpbp2) from Rattus norvegicus (Rat).